Here is a 215-residue protein sequence, read N- to C-terminus: Cytochrome b6 (215 aa).

Residues 32 to 52 (IFYCLGGITLTCFLVQVATGF) traverse the membrane as a helical segment. Residue C35 participates in heme c binding. 2 residues coordinate heme b: H86 and H100. 3 helical membrane passes run 90–110 (ASMMVLMMILHIFRVYLTGGF), 116–136 (LTWVTGVILAVLTVSFGVTGY), and 186–206 (LHTFVLPLLTAIFMLMHFLMI). Positions 187 and 202 each coordinate heme b.

The protein belongs to the cytochrome b family. PetB subfamily. In terms of assembly, the 4 large subunits of the cytochrome b6-f complex are cytochrome b6, subunit IV (17 kDa polypeptide, PetD), cytochrome f and the Rieske protein, while the 4 small subunits are PetG, PetL, PetM and PetN. The complex functions as a dimer. It depends on heme b as a cofactor. Heme c is required as a cofactor.

It is found in the plastid. The protein localises to the chloroplast thylakoid membrane. Functionally, component of the cytochrome b6-f complex, which mediates electron transfer between photosystem II (PSII) and photosystem I (PSI), cyclic electron flow around PSI, and state transitions. The polypeptide is Cytochrome b6 (Marchantia polymorpha (Common liverwort)).